The primary structure comprises 111 residues: Natriuretic peptide TNP-b (111 aa).

Positions 1 to 27 (MVGLSRLAGGGLLLLLLLALLPLALDG) are cleaved as a signal peptide. Positions 28–71 (KPAPLPQALPEALAGGTTALRRDVTEEQQQQLVAEESSGPAAGR) are excised as a propeptide. Disordered regions lie at residues 51 to 77 (VTEEQQQQLVAEESSGPAAGRSDPKIG) and 92 to 111 (SGLGCNRPVQNRPKQIPGGS). A disulfide bridge links Cys-80 with Cys-96. The propeptide occupies 107–111 (IPGGS).

It belongs to the natriuretic peptide family. In terms of tissue distribution, expressed by the venom gland.

The protein resides in the secreted. In terms of biological role, snake venom natriuretic peptide that exhibits vasoactive and probable hypotensive activity. Is only weakly active on natriuretic peptide receptor-C (NPR3). This is Natriuretic peptide TNP-b from Oxyuranus scutellatus scutellatus (Australian taipan).